We begin with the raw amino-acid sequence, 363 residues long: UDP-N-acetylglucosamine--N-acetylmuramyl-(pentapeptide) pyrophosphoryl-undecaprenol N-acetylglucosamine transferase (363 aa).

Residues 10 to 12, asparagine 124, serine 195, isoleucine 250, and glutamine 295 each bind UDP-N-acetyl-alpha-D-glucosamine; that span reads TGG.

Belongs to the glycosyltransferase 28 family. MurG subfamily.

It localises to the cell membrane. The catalysed reaction is di-trans,octa-cis-undecaprenyl diphospho-N-acetyl-alpha-D-muramoyl-L-alanyl-D-glutamyl-meso-2,6-diaminopimeloyl-D-alanyl-D-alanine + UDP-N-acetyl-alpha-D-glucosamine = di-trans,octa-cis-undecaprenyl diphospho-[N-acetyl-alpha-D-glucosaminyl-(1-&gt;4)]-N-acetyl-alpha-D-muramoyl-L-alanyl-D-glutamyl-meso-2,6-diaminopimeloyl-D-alanyl-D-alanine + UDP + H(+). Its pathway is cell wall biogenesis; peptidoglycan biosynthesis. Cell wall formation. Catalyzes the transfer of a GlcNAc subunit on undecaprenyl-pyrophosphoryl-MurNAc-pentapeptide (lipid intermediate I) to form undecaprenyl-pyrophosphoryl-MurNAc-(pentapeptide)GlcNAc (lipid intermediate II). This Listeria monocytogenes serovar 1/2a (strain ATCC BAA-679 / EGD-e) protein is UDP-N-acetylglucosamine--N-acetylmuramyl-(pentapeptide) pyrophosphoryl-undecaprenol N-acetylglucosamine transferase.